Reading from the N-terminus, the 571-residue chain is Proline--tRNA ligase (571 aa).

This sequence belongs to the class-II aminoacyl-tRNA synthetase family. ProS type 1 subfamily. In terms of assembly, homodimer.

It localises to the cytoplasm. It carries out the reaction tRNA(Pro) + L-proline + ATP = L-prolyl-tRNA(Pro) + AMP + diphosphate. Functionally, catalyzes the attachment of proline to tRNA(Pro) in a two-step reaction: proline is first activated by ATP to form Pro-AMP and then transferred to the acceptor end of tRNA(Pro). As ProRS can inadvertently accommodate and process non-cognate amino acids such as alanine and cysteine, to avoid such errors it has two additional distinct editing activities against alanine. One activity is designated as 'pretransfer' editing and involves the tRNA(Pro)-independent hydrolysis of activated Ala-AMP. The other activity is designated 'posttransfer' editing and involves deacylation of mischarged Ala-tRNA(Pro). The misacylated Cys-tRNA(Pro) is not edited by ProRS. The sequence is that of Proline--tRNA ligase from Pasteurella multocida (strain Pm70).